Here is an 82-residue protein sequence, read N- to C-terminus: MMAKLMITVMMVLLLSLQQGADGRSERWRKNQMAASSIMRNLITARIDPPRYCNHIICYEDSECSQWCTAGCNSITSKCDTL.

The N-terminal stretch at 1–23 (MMAKLMITVMMVLLLSLQQGADG) is a signal peptide. Residues 24–50 (RSERWRKNQMAASSIMRNLITARIDPP) constitute a propeptide that is removed on maturation. 3 disulfides stabilise this stretch: Cys-53/Cys-68, Cys-58/Cys-72, and Cys-64/Cys-79.

Belongs to the Pg turripeptide superfamily. In terms of tissue distribution, expressed by the venom duct.

The protein resides in the secreted. The chain is Turripeptide IX-23 from Gemmula speciosa (Splendid gem-turris).